The following is a 104-amino-acid chain: Inclusion membrane protein F (104 aa).

2 helical membrane-spanning segments follow: residues 39 to 59 and 70 to 90; these read LVVA…SLVA and LAVL…VLFI.

The protein localises to the secreted. It is found in the host vacuole. Its subcellular location is the host pathogen-containing vacuole. The protein resides in the host pathogen-containing vacuole membrane. Functionally, inclusion membrane protein probably involved in early modification events of the chlamydial inclusion. The protein is Inclusion membrane protein F of Chlamydia trachomatis serovar L2 (strain ATCC VR-902B / DSM 19102 / 434/Bu).